We begin with the raw amino-acid sequence, 741 residues long: MTASTRNGSPSPSPAAPTAAEQESKSMTTTPANPPETKSQTNGKGSGTAQSSQKPASTSANAKDPLRPRRKKAKRACFACQRAHLTCGDERPCQRCIKRGLQDACHDGVRKKAKYLHDAPNEALLPGIRGNYYNQANTTRNIPNQRGNASNSNSNKVSRQSVSSANFYTPQAARSYNVYVQAKSQQSHVRPAVMQDASMNPSVFHAQSPSSTQNFDLSSNPQTQNLSSAMSQTASSVSGQNQDPFGAAFFDPSHPALFNFDIASMNFGNRYGALEFGMLGHMATGAGDTPPSDSATQRGSIGRSSGTFTAQNFGDSANNQSPFLFGDPVLNDWNPTGQGQANPRNIYNQNAVAGQMGEQNPHAFAIESAPMNFASPSSTESPQMTTTTPFDEANANFSSRTNLMHPTNTPQQSRISTPGLKHQGLHVGVKRRYRSPSSIYESVKEPYSYTSGFHSLTAFIQRRFSPQKTLQIAKALASIRPSFIATTKTLNQDDLIFMEKCFQRTLWEYEDFINACGTPTIVCRRTGEIAAVGKEFSILTGWKKEVLLGKEPNLNVNTGSSLSSASSVRGSSTFTPRNNNTHNSIDPHTGMPTVGGGGASGRTQPVFLAELLDDDSVIEFYEDFAKLAFGDSRGSVMTTCKLLKYKTKEDSAALFHGKEETQQGGVDGSSGTGTTTSGDVATTTATGTSTSNGANANTNGNNTNPNDPSTAASSSASSGCRARSNHLGKRGGRGALPAKRG.

The segment at 1–70 (MTASTRNGSP…NAKDPLRPRR (70 aa)) is disordered. The segment covering 25–61 (KSMTTTPANPPETKSQTNGKGSGTAQSSQKPASTSAN) has biased composition (polar residues). Positions 77-105 (CFACQRAHLTCGDERPCQRCIKRGLQDAC) form a DNA-binding region, zn(2)-C6 fungal-type. Disordered regions lie at residues 135 to 163 (QANT…QSVS), 202 to 239 (SVFH…SVSG), 285 to 321 (GAGD…NNQS), 401 to 421 (TNLM…PGLK), 559 to 590 (GSSL…PHTG), and 655 to 741 (FHGK…AKRG). The segment covering 202–226 (SVFHAQSPSSTQNFDLSSNPQTQNL) has biased composition (polar residues). Residues 227 to 238 (SSAMSQTASSVS) are compositionally biased toward low complexity. 2 stretches are compositionally biased toward polar residues: residues 291–321 (PSDS…NNQS) and 401–416 (TNLM…SRIS). Low complexity predominate over residues 560 to 572 (SSLSSASSVRGSS). The segment covering 573–586 (TFTPRNNNTHNSID) has biased composition (polar residues). The span at 672–718 (TGTTTSGDVATTTATGTSTSNGANANTNGNNTNPNDPSTAASSSASS) shows a compositional bias: low complexity. Positions 723-732 (RSNHLGKRGG) are enriched in basic residues.

The protein belongs to the ERT1/acuK family.

Its subcellular location is the nucleus. Functionally, transcription factor which regulates nonfermentable carbon utilization. Activator of gluconeogenetic genes. The chain is Transcription activator of gluconeogenesis BDBG_05438 from Blastomyces gilchristii (strain SLH14081) (Blastomyces dermatitidis).